The sequence spans 357 residues: Enoyl-[acyl-carrier-protein] reductase, mitochondrial (357 aa).

The transit peptide at 1 to 19 directs the protein to the mitochondrion; the sequence is MLRRGFLSRINAAQWSRQM. Positions 36 to 352 constitute an Enoyl reductase (ER) domain; sequence EVLQLVEDKL…FKGFTGKKYI (317 aa). The active-site Proton donor is Tyr74. NADP(+) contacts are provided by residues Asn147, 173–176, 196–198, 264–267, 289–291, Lys349, and Lys350; these read NSAV, RDR, YGGM, and FWM.

This sequence belongs to the zinc-containing alcohol dehydrogenase family. Quinone oxidoreductase subfamily. In terms of assembly, homodimer. As to expression, expressed in the central nervous system.

It is found in the mitochondrion. The enzyme catalyses a 2,3-saturated acyl-[ACP] + NADP(+) = a (2E)-enoyl-[ACP] + NADPH + H(+). Catalyzes the NADPH-dependent reduction of trans-2-enoyl thioesters in mitochondrial fatty acid synthesis (fatty acid synthesis type II). Fatty acid chain elongation in mitochondria uses acyl carrier protein (ACP) as an acyl group carrier, but the enzyme accepts both ACP and CoA thioesters as substrates in vitro. Involved in iron homeostasis; affecting Fe-S cluster assembly and ceramide metabolism. Required for proper morphology and bioenergetic functions of mitochondria. Required for maintenance of neurons, including photoreceptor neurons. The polypeptide is Enoyl-[acyl-carrier-protein] reductase, mitochondrial (Drosophila melanogaster (Fruit fly)).